A 425-amino-acid polypeptide reads, in one-letter code: Endoplasmic reticulum junction formation protein lunapark (425 aa).

Glycine 2 carries N-myristoyl glycine lipidation. Residues 2 to 45 lie on the Cytoplasmic side of the membrane; the sequence is GGLFSRWRAKPSTVEVLENIDKEIQALEEFREKNQRLQKLWVGR. Residues 15–41 adopt a coiled-coil conformation; it reads VEVLENIDKEIQALEEFREKNQRLQKL. Residues 46–66 traverse the membrane as a helical segment; the sequence is LIIYSSILYLFTCLIVYLWYL. Topologically, residues 67 to 77 are lumenal; it reads PDEFTARLVMT. The helical transmembrane segment at 78–98 threads the bilayer; that stretch reads LPFFAFPLIIWTLRTVLIFFF. Residues 99–425 are Cytoplasmic-facing; sequence SKRTERNNEA…EPSEESLVTK (327 aa). Positions 101–128 form a coiled coil; sequence RTERNNEALDDLKSQKKKILEEVMEKET. 5 positions are modified to phosphoserine: serine 114, serine 153, serine 177, serine 182, and serine 194. Positions 144–242 are disordered; that stretch reads KKAKEFEPPS…HPPGPPLARP (99 aa). Positions 186 to 195 are enriched in pro residues; that stretch reads GPPPQGPVSP. Threonine 211 is subject to Phosphothreonine. Serine 222 bears the Phosphoserine mark. A C4-type; plays a role in ER morphology zinc finger spans residues 271–296; sequence CQQCFSHNGMALKEEFEYIAFRCAYC. A phosphoserine mark is found at serine 316, serine 348, and serine 380. The segment at 320-425 is disordered; sequence RQAVEGSSST…EPSEESLVTK (106 aa). A compositionally biased stretch (acidic residues) spans 384-398; the sequence is EPAENQEETENEETS. Phosphoserine is present on serine 411.

It belongs to the lunapark family. Homodimer; homodimerization requires the C4-type zinc finger motif and decreases during mitosis in a phosphorylation-dependent manner. In terms of processing, myristoylated; myristoylation is necessary for the endoplasmic reticulum (ER) three-way ER tubular junction formation, but is not required neither for membrane translocation, membrane topology formation, nor for the specific localization to ER membranes. Post-translationally, phosphorylated. Phosphorylation occurs at Ser-177, Ser-182, Ser-222, Ser-316 and Ser-380 during interphase. Phosphorylation occurs at Ser-114, Ser-153, Ser-194, Thr-211 and Ser-348 during mitosis; these phosphorylations reduce both its homodimerization and the ER three-way tubular junction formation. Subject to proteasomal degradation following phosphorylation during mitosis. In terms of tissue distribution, expressed in most tissues at basal level, with reinforcement in distal limb buds, genital bud, and in parts of the central nervous system.

It localises to the endoplasmic reticulum membrane. Endoplasmic reticulum (ER)-shaping membrane protein that plays a role in determining ER morphology. Involved in the stabilization of nascent three-way ER tubular junctions within the ER network. May also play a role as a curvature-stabilizing protein within three-way ER tubular junction network. May be involved in limb and central nervous system development. This is Endoplasmic reticulum junction formation protein lunapark from Mus musculus (Mouse).